The chain runs to 79 residues: Raniseptin-3 (79 aa).

An N-terminal signal peptide occupies residues 1 to 22 (MAFLKKSLFLVLFLGIVSLSIC). Positions 23 to 49 (EEEKREGEEEEKQEEENEELSEEELRE) are excised as a propeptide.

The protein belongs to the frog skin active peptide (FSAP) family. Dermaseptin subfamily. In terms of tissue distribution, expressed by the skin glands.

Its subcellular location is the secreted. Its function is as follows. Has antibacterial activity. This is Raniseptin-3 from Boana raniceps (Chaco tree frog).